The sequence spans 1038 residues: Ras GTPase-activating protein 1 (1038 aa).

N-acetylmethionine is present on methionine 1. Positions 1 to 16 (MMAAEAGSEEGGPATA) are enriched in low complexity. 2 disordered regions span residues 1 to 24 (MMAAEAGSEEGGPATAGTGGAAAT) and 117 to 152 (ETLGPGGGFPPLPPPPLLPPLGSGLGTVDEGDSLDG). Over residues 124 to 135 (GFPPLPPPPLLP) the composition is skewed to pro residues. The SH2 1 domain maps to 172–263 (WYHGKLDRTI…LKGEKLLYPV (92 aa)). The 63-residue stretch at 270–332 (EDRRRVRAIL…VEDLVEEVGR (63 aa)) folds into the SH3 domain. The SH2 2 domain occupies 342–432 (WFHGKISKQE…VEGYYLKEPV (91 aa)). Residues 465–568 (NIVKKGYLLK…WMKGLQAFCS (104 aa)) form the PH domain. The 114-residue stretch at 568–681 (SLRKSSPGTS…QKGHATDEWF (114 aa)) folds into the C2 domain. A Phosphotyrosine modification is found at tyrosine 606. In terms of domain architecture, Ras-GAP spans 755–965 (KLESLLLCTL…HRMIMFLDEL (211 aa)). Phosphoserine is present on serine 822.

In terms of assembly, interacts with SQSTM1. Interacts with SPSB1; the interaction does not promote degradation. Interacts with CAV2 (tyrosine phosphorylated form). Directly interacts with NCK1. Interacts with PDGFRB (tyrosine phosphorylated). Interacts (via SH2 domain) with the 'Tyr-9' phosphorylated form of PDPK1. Interacts with tyrosine-phosphorylated EPHB4. In terms of processing, phosphorylated by SRC and LCK. The phosphorylation SRC inhibits its ability to stimulate the Ras-GTPase activity, whereas phosphorylation by LCK does not display any effect on stimulation activity.

Its subcellular location is the cytoplasm. In terms of biological role, inhibitory regulator of the Ras-cyclic AMP pathway. Stimulates the GTPase of normal but not oncogenic Ras p21. The polypeptide is Ras GTPase-activating protein 1 (Rasa1) (Rattus norvegicus (Rat)).